Here is a 192-residue protein sequence, read N- to C-terminus: GTP-binding protein RHO2 (192 aa).

14–21 (GDGACGKT) provides a ligand contact to GTP. The Effector region signature appears at 36–44 (YHPTVFENY). Residues 61–65 (DTAGQ) and 119–122 (LKKD) contribute to the GTP site. Cysteine 188 carries S-palmitoyl cysteine lipidation. Residue cysteine 189 is modified to Cysteine methyl ester. Residue cysteine 189 is the site of S-geranylgeranyl cysteine attachment. Residues 190–192 (IIL) constitute a propeptide, removed in mature form.

The protein belongs to the small GTPase superfamily. Rho family. As to quaternary structure, interacts with BEM4.

It is found in the cell membrane. The catalysed reaction is GTP + H2O = GDP + phosphate + H(+). This chain is GTP-binding protein RHO2 (RHO2), found in Saccharomyces cerevisiae (strain ATCC 204508 / S288c) (Baker's yeast).